Consider the following 70-residue polypeptide: Cold shock-like protein CspJ (70 aa).

In terms of domain architecture, CSD spans 7-67 (GLVKWFNPEK…GPKGPSAVNV (61 aa)).

It localises to the cytoplasm. The polypeptide is Cold shock-like protein CspJ (cspJ) (Salmonella typhimurium (strain SL1344)).